Consider the following 960-residue polypeptide: Gamma-aminobutyric acid type B receptor subunit 1 (960 aa).

A signal peptide spans 1–19; sequence MLLLLLVPLFLRPLGAGGA. Over 20-590 the chain is Extracellular; that stretch reads QTPNVTSEGC…KTFRFLSQKL (571 aa). N-linked (GlcNAc...) asparagine glycosylation is found at Asn-23 and Asn-83. 2 Sushi domains span residues 29 to 95 and 97 to 158; these read CQII…PSRC and RICS…HCQV. 3 cysteine pairs are disulfide-bonded: Cys-99–Cys-144, Cys-130–Cys-156, and Cys-219–Cys-245. 4-aminobutanoate contacts are provided by Ser-246, Ser-269, His-286, and Tyr-366. Cys-375 and Cys-409 form a disulfide bridge. 2 N-linked (GlcNAc...) asparagine glycosylation sites follow: Asn-408 and Asn-439. 4-aminobutanoate is bound at residue Glu-465. Residues Asn-481, Asn-501, and Asn-513 are each glycosylated (N-linked (GlcNAc...) asparagine). Residues 591–611 traverse the membrane as a helical segment; it reads FISVSVLSSLGIVLAVVCLSF. The Cytoplasmic segment spans residues 612 to 630; that stretch reads NIYNSHVRYIQNSQPNLNN. A helical transmembrane segment spans residues 631–651; that stretch reads LTAVGCSLALAAVFPLGLDGY. The Extracellular segment spans residues 652 to 666; that stretch reads HIGRSQFPFVCQARL. A helical transmembrane segment spans residues 667–687; it reads WLLGLGFSLGYGSMFTKIWWV. Residues 688-709 lie on the Cytoplasmic side of the membrane; that stretch reads HTVFTKKEEKKEWRKTLEPWKL. A helical transmembrane segment spans residues 710–730; that stretch reads YATVGLLVGMDILTLAIWQIV. Over 731–767 the chain is Extracellular; it reads DPLHRTIETFAKEEPKEDIDVSILPQLEHCSSKKMNT. The chain crosses the membrane as a helical span at residues 768 to 788; it reads WLGIFYGYKGLLLLLGIFLAY. Topologically, residues 789–803 are cytoplasmic; sequence ETKSVSTEKINDHRA. A helical transmembrane segment spans residues 804-824; the sequence is VGMAIYNVAVLCLITAPVTMI. The Extracellular segment spans residues 825 to 832; sequence LSSQQDAA. Residues 833 to 853 form a helical membrane-spanning segment; it reads FAFASLAIVFSSYITLVVLFV. Over 854-960 the chain is Cytoplasmic; sequence PKMRRLITRG…DGSRVHLLYK (107 aa). Disordered regions lie at residues 866–891 and 908–960; these read QSEAQDTMKTGSSTNNNEEEKSRLLE and VSEL…LLYK. Over residues 867-879 the composition is skewed to polar residues; the sequence is SEAQDTMKTGSST. Residues 868–924 are a coiled coil; sequence EAQDTMKTGSSTNNNEEEKSRLLEKENRELEKIIAEKEERVSELRHQLQSRQQIRSR. Thr-872 bears the Phosphothreonine mark. The interval 887-915 is interaction with ATF4; it reads SRLLEKENRELEKIIAEKEERVSELRHQL. Residue Thr-929 is modified to Phosphothreonine.

It belongs to the G-protein coupled receptor 3 family. GABA-B receptor subfamily. As to quaternary structure, heterodimer of GABBR1 and GABBR2. Homodimers may form, but are inactive. Interacts (via C-terminus) with ATF4 (via leucine zipper domain). Interacts with JAKMIP1. Interacts with KCTD8, KCTD12, KCTD12B and KCTD16; this interaction determines the pharmacology and kinetics of the receptor response, the KCTD proteins markedly accelerating the GABA-B response, although to different extents. In terms of tissue distribution, expressed in neuronal tissue including cortex, cerebellum and spinal cord. Not detected in non-neuronal tissues including heart, liver, spleen and kidney.

It is found in the cell membrane. The protein resides in the postsynaptic cell membrane. Its subcellular location is the cell projection. It localises to the dendrite. Its function is as follows. Component of a heterodimeric G-protein coupled receptor for GABA, formed by GABBR1 and GABBR2. Within the heterodimeric GABA receptor, only GABBR1 seems to bind agonists, while GABBR2 mediates coupling to G proteins. Ligand binding causes a conformation change that triggers signaling via guanine nucleotide-binding proteins (G proteins) and modulates the activity of down-stream effectors, such as adenylate cyclase. Signaling inhibits adenylate cyclase, stimulates phospholipase A2, activates potassium channels, inactivates voltage-dependent calcium-channels and modulates inositol phospholipid hydrolysis. Calcium is required for high affinity binding to GABA. Plays a critical role in the fine-tuning of inhibitory synaptic transmission. Pre-synaptic GABA receptor inhibits neurotransmitter release by down-regulating high-voltage activated calcium channels, whereas postsynaptic GABA receptor decreases neuronal excitability by activating a prominent inwardly rectifying potassium (Kir) conductance that underlies the late inhibitory postsynaptic potentials. Not only implicated in synaptic inhibition but also in hippocampal long-term potentiation, slow wave sleep, muscle relaxation and antinociception. This is Gamma-aminobutyric acid type B receptor subunit 1 (Gabbr1) from Mus musculus (Mouse).